Here is a 219-residue protein sequence, read N- to C-terminus: ATP synthase delta chain, chloroplastic (219 aa).

A chloroplast-targeting transit peptide spans 1 to 33 (MLAAKSIAGPRAFKASAVRAAPKAGRRTVVVMA).

The protein belongs to the ATPase delta chain family. F-type ATPases have 2 components, F(1) - the catalytic core - and F(0) - the membrane proton channel. F(1) has five subunits: alpha(3), beta(3), gamma(1), delta(1), epsilon(1). F(0) has four main subunits: a(1), b(1), b'(1) and c(10-14). The alpha and beta chains form an alternating ring which encloses part of the gamma chain. F(1) is attached to F(0) by a central stalk formed by the gamma and epsilon chains, while a peripheral stalk is formed by the delta, b and b' chains.

The protein localises to the plastid. It localises to the chloroplast thylakoid membrane. In terms of biological role, f(1)F(0) ATP synthase produces ATP from ADP in the presence of a proton or sodium gradient. F-type ATPases consist of two structural domains, F(1) containing the extramembraneous catalytic core and F(0) containing the membrane proton channel, linked together by a central stalk and a peripheral stalk. During catalysis, ATP synthesis in the catalytic domain of F(1) is coupled via a rotary mechanism of the central stalk subunits to proton translocation. Its function is as follows. This protein seems to be part of the stalk that links CF(0) to CF(1). It either transmits conformational changes from CF(0) into CF(1) or is implicated in proton conduction. The polypeptide is ATP synthase delta chain, chloroplastic (Chlamydomonas reinhardtii (Chlamydomonas smithii)).